The chain runs to 458 residues: E3 ubiquitin-protein ligase RNF25 (458 aa).

An RWD domain is found at 18–128; sequence SEVEVLESIY…EKGKEILTDN (111 aa). Positions 135, 138, 153, 155, 161, 197, and 200 each coordinate Zn(2+). The RING-type zinc finger occupies 135 to 201; sequence CVICLYGFQE…AVGVQCPVCR (67 aa). 2 disordered regions span residues 267-299 and 317-458; these read PPAP…TSAT and KTPG…EDGS. 2 stretches are compositionally biased toward polar residues: residues 282-299 and 362-372; these read GSHQ…TSAT and LKGTSDTQKLQ. 2 stretches are compositionally biased toward basic and acidic residues: residues 377–388 and 412–423; these read PLKESMDLKPES and RTRDCAHWERAK. Low complexity predominate over residues 432–443; that stretch reads PRLPRGRGAYRP.

The protein belongs to the RNF25 family. In terms of assembly, interacts with UBE2D2, and may also interact with UBE2E1 and UBE2E3. Interacts with RELA/p65. Ubiquitinated; autoubiquitinated.

It is found in the cytoplasm. The enzyme catalyses S-ubiquitinyl-[E2 ubiquitin-conjugating enzyme]-L-cysteine + [acceptor protein]-L-lysine = [E2 ubiquitin-conjugating enzyme]-L-cysteine + N(6)-ubiquitinyl-[acceptor protein]-L-lysine.. The protein operates within protein modification; protein ubiquitination. Its function is as follows. E3 ubiquitin-protein ligase that plays a key role in the RNF14-RNF25 translation quality control pathway, a pathway that takes place when a ribosome has stalled during translation, and which promotes ubiquitination and degradation of translation factors on stalled ribosomes. Catalyzes ubiquitination of RPS27A in response to ribosome collisions, promoting activation of RNF14. RNF25 catalyzes ubiquitination of other ribosomal proteins on stalled ribosomes, such as RPL0, RPL1, RPL12, RPS13 and RPS17. Also involved in ubiquitination and degradation of stalled ETF1/eRF1. Independently of its function in the response to stalled ribosomes, mediates ubiquitination and subsequent proteasomal degradation of NKD2. May also stimulate transcription mediated by NF-kappa-B via its interaction with RELA/p65. In Bos taurus (Bovine), this protein is E3 ubiquitin-protein ligase RNF25 (RNF25).